We begin with the raw amino-acid sequence, 126 residues long: Membrane-anchored ubiquitin-fold protein 2 (126 aa).

Residues 14–79 (VEVRFRLDDG…VLENNRTLAE (66 aa)) form the Ubiquitin-like domain. Cys-123 carries the cysteine methyl ester modification. Residue Cys-123 is the site of S-geranylgeranyl cysteine attachment. Positions 124-126 (TIL) are cleaved as a propeptide — removed in mature form.

The protein localises to the cell membrane. May serve as docking site to facilitate the association of other proteins to the plasma membrane. The polypeptide is Membrane-anchored ubiquitin-fold protein 2 (MUB2) (Oryza sativa subsp. japonica (Rice)).